A 415-amino-acid polypeptide reads, in one-letter code: Coenzyme F420 hydrogenase subunit alpha (415 aa).

Positions 68, 71, 391, and 394 each coordinate Ni(2+).

It belongs to the [NiFe]/[NiFeSe] hydrogenase large subunit family. Heterocomplex of the form (alpha(1)beta(1)gamma(1))(8). It depends on Ni(2+) as a cofactor. Iron-sulfur cluster serves as cofactor. The cofactor is FAD.

The enzyme catalyses oxidized coenzyme F420-(gamma-L-Glu)(n) + H2 + H(+) = reduced coenzyme F420-(gamma-L-Glu)(n). Reduces the physiological low-potential two-electron acceptor coenzyme F420, and the artificial one-electron acceptor methylviologen. This Methanocaldococcus jannaschii (strain ATCC 43067 / DSM 2661 / JAL-1 / JCM 10045 / NBRC 100440) (Methanococcus jannaschii) protein is Coenzyme F420 hydrogenase subunit alpha (frhA).